Consider the following 376-residue polypeptide: Heme chaperone HemW (376 aa).

The region spanning 1-236 (MFKLPPISLY…LKQSGYKKYE (236 aa)) is the Radical SAM core domain. Tyr10 serves as a coordination point for S-adenosyl-L-methionine. The [4Fe-4S] cluster site is built by Cys16, Cys20, and Cys23. Residues Gly66, 67–68 (GT), Glu99, Gln126, Arg138, and Asp162 each bind S-adenosyl-L-methionine.

The protein belongs to the anaerobic coproporphyrinogen-III oxidase family. HemW subfamily. Requires [4Fe-4S] cluster as cofactor.

Its subcellular location is the cytoplasm. Functionally, probably acts as a heme chaperone, transferring heme to an unknown acceptor. Binds one molecule of heme per monomer, possibly covalently. Binds 1 [4Fe-4S] cluster. The cluster is coordinated with 3 cysteines and an exchangeable S-adenosyl-L-methionine. The chain is Heme chaperone HemW from Buchnera aphidicola subsp. Schizaphis graminum (strain Sg).